The sequence spans 121 residues: Small ribosomal subunit protein uS13 (121 aa).

Residues 92-121 are disordered; sequence RKGLPVRGQRTKTNARTRKGPRKSGVQLKK.

Belongs to the universal ribosomal protein uS13 family. Part of the 30S ribosomal subunit. Forms a loose heterodimer with protein S19. Forms two bridges to the 50S subunit in the 70S ribosome.

Its function is as follows. Located at the top of the head of the 30S subunit, it contacts several helices of the 16S rRNA. In the 70S ribosome it contacts the 23S rRNA (bridge B1a) and protein L5 of the 50S subunit (bridge B1b), connecting the 2 subunits; these bridges are implicated in subunit movement. Contacts the tRNAs in the A and P-sites. The sequence is that of Small ribosomal subunit protein uS13 from Polynucleobacter asymbioticus (strain DSM 18221 / CIP 109841 / QLW-P1DMWA-1) (Polynucleobacter necessarius subsp. asymbioticus).